The following is a 551-amino-acid chain: Sodium-dependent high-affinity dicarboxylate transporter 2 (551 aa).

The next 10 membrane-spanning stretches (helical) occupy residues Leu9–Gly29, Cys34–Val54, Ser82–His102, Val119–Ala139, Phe194–Ile214, Trp243–Val263, Val347–Ile367, Ile417–Met437, Ile449–Ala469, and Val497–Ile517.

Belongs to the SLC13A/DASS transporter (TC 2.A.47) family. NADC subfamily.

It localises to the membrane. In terms of biological role, high-affinity sodium-dicarboxylate cotransporter that accepts a range of tricarboxylic acid-cycle intermediates with 4-5 carbon atoms. There is no interaction with monocarboxylates. The protein is Sodium-dependent high-affinity dicarboxylate transporter 2 (nac-2) of Caenorhabditis elegans.